Here is a 351-residue protein sequence, read N- to C-terminus: Transmembrane protein 255A (351 aa).

4 helical membrane passes run 30–50 (IYVT…GLAA), 57–77 (VTVG…LGII), 89–109 (LVAS…CAIV), and 226–246 (TILN…LGGF). The tract at residues 302-331 (FPSSPPSGLSDEQEPQSPSPSPSYMWSSSA) is disordered.

It belongs to the TMEM255 family.

It localises to the membrane. The chain is Transmembrane protein 255A (Tmem255a) from Rattus norvegicus (Rat).